The following is a 201-amino-acid chain: Large ribosomal subunit protein mL61 (201 aa).

A disordered region spans residues 87-118 (RDDKDAKPSSTPFPTSSADGSSPAPKPAQGER). Residues 94 to 106 (PSSTPFPTSSADG) are compositionally biased toward polar residues.

It belongs to the mitochondrion-specific ribosomal protein mL61 family. Component of the mitochondrial large ribosomal subunit (mt-LSU). Mature N.crassa 74S mitochondrial ribosomes consist of a small (37S) and a large (54S) subunit. The 37S small subunit contains a 16S ribosomal RNA (16S mt-rRNA) and 32 different proteins. The 54S large subunit contains a 23S rRNA (23S mt-rRNA) and 42 different proteins.

Its subcellular location is the mitochondrion. Its function is as follows. Component of the mitochondrial ribosome (mitoribosome), a dedicated translation machinery responsible for the synthesis of mitochondrial genome-encoded proteins, including at least some of the essential transmembrane subunits of the mitochondrial respiratory chain. The mitoribosomes are attached to the mitochondrial inner membrane and translation products are cotranslationally integrated into the membrane. This is Large ribosomal subunit protein mL61 (mrp49) from Neurospora crassa (strain ATCC 24698 / 74-OR23-1A / CBS 708.71 / DSM 1257 / FGSC 987).